The primary structure comprises 44 residues: MSYYSHLSGGLGCGLAVAVTMGRTVAVAEYGRCRHGCHSSYSAR.

It belongs to the KRTAP type 20 family. As to quaternary structure, interacts with hair keratins.

Functionally, in the hair cortex, hair keratin intermediate filaments are embedded in an interfilamentous matrix, consisting of hair keratin-associated proteins (KRTAP), which are essential for the formation of a rigid and resistant hair shaft through their extensive disulfide bond cross-linking with abundant cysteine residues of hair keratins. The matrix proteins include the high-sulfur and high-glycine-tyrosine keratins. The chain is Putative keratin-associated protein 20-4 (KRTAP20-4) from Homo sapiens (Human).